The chain runs to 339 residues: Uroporphyrinogen decarboxylase (339 aa).

Substrate is bound by residues 23 to 27 (RQAGR), aspartate 72, tyrosine 147, threonine 202, and histidine 315.

The protein belongs to the uroporphyrinogen decarboxylase family. In terms of assembly, homodimer.

It localises to the cytoplasm. The catalysed reaction is uroporphyrinogen III + 4 H(+) = coproporphyrinogen III + 4 CO2. It participates in porphyrin-containing compound metabolism; protoporphyrin-IX biosynthesis; coproporphyrinogen-III from 5-aminolevulinate: step 4/4. Functionally, catalyzes the decarboxylation of four acetate groups of uroporphyrinogen-III to yield coproporphyrinogen-III. The chain is Uroporphyrinogen decarboxylase from Geotalea daltonii (strain DSM 22248 / JCM 15807 / FRC-32) (Geobacter daltonii).